The chain runs to 452 residues: Pup--protein ligase (452 aa).

Residue glutamate 9 coordinates Mg(2+). Residue arginine 53 participates in ATP binding. Mg(2+) is bound at residue tyrosine 55. Aspartate 57 serves as the catalytic Proton acceptor. Residue glutamate 63 coordinates Mg(2+). ATP contacts are provided by threonine 66 and tryptophan 419.

Belongs to the Pup ligase/Pup deamidase family. Pup-conjugating enzyme subfamily.

The enzyme catalyses ATP + [prokaryotic ubiquitin-like protein]-L-glutamate + [protein]-L-lysine = ADP + phosphate + N(6)-([prokaryotic ubiquitin-like protein]-gamma-L-glutamyl)-[protein]-L-lysine.. The protein operates within protein degradation; proteasomal Pup-dependent pathway. It functions in the pathway protein modification; protein pupylation. Its function is as follows. Catalyzes the covalent attachment of the prokaryotic ubiquitin-like protein modifier Pup to the proteasomal substrate proteins, thereby targeting them for proteasomal degradation. This tagging system is termed pupylation. The ligation reaction involves the side-chain carboxylate of the C-terminal glutamate of Pup and the side-chain amino group of a substrate lysine. The polypeptide is Pup--protein ligase (Rhodococcus jostii (strain RHA1)).